We begin with the raw amino-acid sequence, 426 residues long: Enolase (426 aa).

(2R)-2-phosphoglycerate is bound at residue Gln162. The active-site Proton donor is Glu204. 3 residues coordinate Mg(2+): Asp241, Glu284, and Asp311. (2R)-2-phosphoglycerate is bound by residues Lys336, Arg365, Ser366, and Lys387. Residue Lys336 is the Proton acceptor of the active site.

The protein belongs to the enolase family. It depends on Mg(2+) as a cofactor.

The protein localises to the cytoplasm. It is found in the secreted. It localises to the cell surface. It carries out the reaction (2R)-2-phosphoglycerate = phosphoenolpyruvate + H2O. The protein operates within carbohydrate degradation; glycolysis; pyruvate from D-glyceraldehyde 3-phosphate: step 4/5. In terms of biological role, catalyzes the reversible conversion of 2-phosphoglycerate (2-PG) into phosphoenolpyruvate (PEP). It is essential for the degradation of carbohydrates via glycolysis. The sequence is that of Enolase from Acidithiobacillus ferrooxidans (strain ATCC 23270 / DSM 14882 / CIP 104768 / NCIMB 8455) (Ferrobacillus ferrooxidans (strain ATCC 23270)).